Consider the following 426-residue polypeptide: Glucose-6-phosphate isomerase (426 aa).

Glu282 serves as the catalytic Proton donor. Catalysis depends on residues His303 and Lys417.

Belongs to the GPI family.

It is found in the cytoplasm. It carries out the reaction alpha-D-glucose 6-phosphate = beta-D-fructose 6-phosphate. It participates in carbohydrate biosynthesis; gluconeogenesis. Its pathway is carbohydrate degradation; glycolysis; D-glyceraldehyde 3-phosphate and glycerone phosphate from D-glucose: step 2/4. In terms of biological role, catalyzes the reversible isomerization of glucose-6-phosphate to fructose-6-phosphate. This chain is Glucose-6-phosphate isomerase, found in Aster yellows witches'-broom phytoplasma (strain AYWB).